The primary structure comprises 73 residues: Large ribosomal subunit protein bL27c (73 aa).

Belongs to the bacterial ribosomal protein bL27 family.

It is found in the plastid. The protein resides in the chloroplast. The chain is Large ribosomal subunit protein bL27c (rpl27) from Chrysochromulina alifera (Plankton alga).